Consider the following 1765-residue polypeptide: Sodium channel protein type 11 subunit alpha (1765 aa).

The Cytoplasmic segment spans residues 1 to 126 (MEERYYPVIF…PIRSFMIRIS (126 aa)). The I repeat unit spans residues 115-406 (FNPIRSFMIR…VTMAYEEQNR (292 aa)). The chain crosses the membrane as a helical span at residues 127–148 (VHSVFSMFIICTVIINCMFMAN). Asparagine 149 is a glycosylation site (N-linked (GlcNAc...) asparagine). Residues 149 to 159 (NSSVDSRPSSN) lie on the Extracellular side of the membrane. Residues 160–179 (IPEYVFIGIYVLEAVIKILA) traverse the membrane as a helical segment. Topologically, residues 180-191 (RGFIVDEFSYLR) are cytoplasmic. Residues 192–211 (DPWNWLDFIVIGTAIAPCFL) form a helical membrane-spanning segment. Topologically, residues 212 to 219 (GNKVNNLS) are extracellular. Asparagine 217 carries N-linked (GlcNAc...) asparagine glycosylation. A helical; Voltage-sensor transmembrane segment spans residues 220 to 239 (TLRTFRVLRALKAISVISGL). Over 240 to 255 (KVIVGALLRSVKKLVD) the chain is Cytoplasmic. A helical membrane pass occupies residues 256-269 (VMVLTLFCLSIFAL). At 270–342 (VGQQLFMGIL…PDYNYTNFDS (73 aa)) the chain is on the extracellular side. Cysteine 283 and cysteine 320 are joined by a disulfide. Asparagine 303, asparagine 327, and asparagine 336 each carry an N-linked (GlcNAc...) asparagine glycan. Residues 343–367 (FGWSFLAMFRVMTQDSWEKLYRQIL) constitute an intramembrane region (pore-forming). Residues 368 to 374 (RTSGIYF) are Extracellular-facing. Residues 375–400 (VFFFVVVIFLGSFYLLNLTLAVVTMA) form a helical membrane-spanning segment. At 401–570 (YEEQNRNVAA…WLCIKKVLQT (170 aa)) the chain is on the cytoplasmic side. Residues 470–490 (RGSKTARASASDSEDDASKNP) form a disordered region. One copy of the II repeat lies at 557–821 (CSPPWLCIKK…EGETRKTKVQ (265 aa)). The chain crosses the membrane as a helical span at residues 571–594 (IMTDPFTELAITICIIVNTVFLAM). The Extracellular segment spans residues 595–605 (EHHNMDNSLKD). The chain crosses the membrane as a helical span at residues 606 to 629 (ILKIGNWVFTGIFIAEMCLKIIAL). Residues 630 to 637 (DPYHYFRH) lie on the Cytoplasmic side of the membrane. A helical membrane pass occupies residues 638–659 (GWNIFDSIVALVSLADVLFHKL). The Extracellular portion of the chain corresponds to 660–664 (SKNLS). N-linked (GlcNAc...) asparagine glycosylation occurs at asparagine 662. Residues 665 to 684 (FLASLRVLRVFKLAKSWPTL) form a helical; Voltage-sensor membrane-spanning segment. Residues 685-699 (NTLIKIIGHSVGALG) are Cytoplasmic-facing. Residues 700–722 (NLTVVLTIVVFIFSVVGMRLFGA) form a helical membrane-spanning segment. Over 723 to 742 (KFNKTCSTSPESLRRWHMGD) the chain is Extracellular. Asparagine 725 is a glycosylation site (N-linked (GlcNAc...) asparagine). The segment at residues 743–763 (FYHSFLVVFRILCGEWIENMW) is an intramembrane region (pore-forming). The Extracellular segment spans residues 764–773 (ECMQEMEGSP). Residues cysteine 765 and cysteine 775 are joined by a disulfide bond. The helical transmembrane segment at 774–799 (LCVIVFVLIMVVGKLVVLNLFIALLL) threads the bilayer. The Cytoplasmic segment spans residues 800 to 1030 (NSFSNEEKDG…WWNLRKTCYQ (231 aa)). A disordered region spans residues 850–869 (NSPKPNEATESFAGESRDTA). The III repeat unit spans residues 1023-1320 (NLRKTCYQIV…KKYYNAMKKL (298 aa)). The helical transmembrane segment at 1031 to 1053 (IVKHSWFESFIIFVILLSSGALI) threads the bilayer. The Extracellular segment spans residues 1054-1067 (FEDVNLPSRPQVEK). A helical transmembrane segment spans residues 1068-1093 (LLKCTDNIFTFIFLLEMILKWVAFGF). Over 1094 to 1099 (RKYFTS) the chain is Cytoplasmic. A helical transmembrane segment spans residues 1100 to 1117 (AWCWLDFLIVVVSGLSLT). Asparagine 1118 is a topological domain (extracellular). Residues 1119 to 1140 (LPNLKSFRNLRALRPLRALSQF) form a helical; Voltage-sensor membrane-spanning segment. Over 1141-1159 (EGMKVVVNALMSAIPAILN) the chain is Cytoplasmic. A helical membrane pass occupies residues 1160 to 1181 (VLLVCLIFWLIFCILGVNFFSG). At 1182–1224 (KFGRCINGTDINKYFNASNVPNQSQCLVSNYTWKVPNVNFDNV) the chain is on the extracellular side. N-linked (GlcNAc...) asparagine glycosylation is found at asparagine 1188, asparagine 1197, asparagine 1203, and asparagine 1211. Positions 1225-1246 (GNAYLALLQVATYKGWLDIMNA) form an intramembrane region, pore-forming. At 1247–1262 (AVDSRGKDEQPAFEAN) the chain is on the extracellular side. A helical transmembrane segment spans residues 1263 to 1289 (LYAYLYFVVFIIFGSFFTLNLFIGVII). Residues 1290–1342 (DNFNQQQKKLGGQDIFMTEEQKKYYNAMKKLGTKKPQKPIPRPLNKCQAFVFD) are Cytoplasmic-facing. The stretch at 1329-1619 (IPRPLNKCQA…WEKFDPEATQ (291 aa)) is one IV repeat. Residues 1343–1366 (LVTSQVFDVIILGLIVTNMIIMMA) form a helical membrane-spanning segment. Topologically, residues 1367 to 1377 (ESEGQPNEVKK) are extracellular. A helical transmembrane segment spans residues 1378–1401 (IFDILNIVFVVIFTVECLIKVFAL). Residues 1402–1407 (RQHYFT) lie on the Cytoplasmic side of the membrane. The chain crosses the membrane as a helical span at residues 1408 to 1431 (NGWNLFDCVVVVLSIISTLVSGLE). Over 1432-1440 (NSNVFPPTL) the chain is Extracellular. Residues 1441–1463 (FRIVRLARIGRILRLVRAARGIR) form a helical; Voltage-sensor membrane-spanning segment. Over 1464–1478 (TLLFALMMSLPSLFN) the chain is Cytoplasmic. Residues 1479 to 1501 (IGLLLFLVMFIYAIFGMNWFSKV) traverse the membrane as a helical segment. Residues 1502–1515 (KRGSGIDDIFNFDT) are Extracellular-facing. Residues 1516 to 1538 (FSGSMLCLFQITTSAGWDALLNP) constitute an intramembrane region (pore-forming). The Extracellular segment spans residues 1539 to 1559 (MLESKASCNSSSQESCQQPQI). A helical transmembrane segment spans residues 1560–1584 (AIVYFVSYIIISFLIVVNMYIAVIL). The Cytoplasmic segment spans residues 1585-1765 (ENFNTATEES…DVPKIKVHCD (181 aa)).

Belongs to the sodium channel (TC 1.A.1.10) family. Nav1.9/SCN11A subfamily. As to quaternary structure, the voltage-resistant sodium channel consists of an ion conducting pore forming alpha-subunit regulated by one or more auxiliary subunits SCN1B, SCN2B and SCN3B. As to expression, expressed in the dorsal root ganglia (C-fiber neurons), spinal cord, trigeminal ganglia, testis, ovary, uterus and small intestine.

It localises to the cell membrane. The enzyme catalyses Na(+)(in) = Na(+)(out). In terms of biological role, sodium channel mediating the voltage-dependent sodium ion permeability of excitable membranes. Assuming opened or closed conformations in response to the voltage difference across the membrane, the protein forms a sodium-selective channel through which sodium ions may pass in accordance with their electrochemical gradient. Involved in membrane depolarization during action potential in nociceptors which function as key relay stations for the electrical transmission of pain signals from the periphery to the central nervous system. Also involved in rapid BDNF-evoked neuronal depolarization. The polypeptide is Sodium channel protein type 11 subunit alpha (Mus musculus (Mouse)).